A 640-amino-acid polypeptide reads, in one-letter code: Threonine--tRNA ligase (640 aa).

In terms of domain architecture, TGS spans 1–61 (MPVITLPDGS…SNDATLQIIT (61 aa)). The interval 242 to 533 (DHRKIGKQLD…LIEHYAGVFP (292 aa)) is catalytic. Zn(2+) contacts are provided by Cys-333, His-384, and His-510.

The protein belongs to the class-II aminoacyl-tRNA synthetase family. In terms of assembly, homodimer. Requires Zn(2+) as cofactor.

It is found in the cytoplasm. The catalysed reaction is tRNA(Thr) + L-threonine + ATP = L-threonyl-tRNA(Thr) + AMP + diphosphate + H(+). Catalyzes the attachment of threonine to tRNA(Thr) in a two-step reaction: L-threonine is first activated by ATP to form Thr-AMP and then transferred to the acceptor end of tRNA(Thr). Also edits incorrectly charged L-seryl-tRNA(Thr). This chain is Threonine--tRNA ligase, found in Pseudomonas putida (strain ATCC 47054 / DSM 6125 / CFBP 8728 / NCIMB 11950 / KT2440).